The primary structure comprises 491 residues: Ketol-acid reductoisomerase (NADP(+)) (491 aa).

Residues 15–208 enclose the KARI N-terminal Rossmann domain; that stretch reads AQLGKCRFMG…GGHRAGVLES (194 aa). Residues 45 to 48, Arg-68, Arg-76, Ser-78, and 108 to 110 contribute to the NADP(+) site; these read CGAQ and DKQ. Residue His-132 is part of the active site. Residue Gly-158 participates in NADP(+) binding. 2 KARI C-terminal knotted domains span residues 209–344 and 345–484; these read SFVA…TAPQ and YEGK…MTDM. 4 residues coordinate Mg(2+): Asp-217, Glu-221, Glu-389, and Glu-393. Ser-414 is a binding site for substrate.

This sequence belongs to the ketol-acid reductoisomerase family. Mg(2+) serves as cofactor.

The enzyme catalyses (2R)-2,3-dihydroxy-3-methylbutanoate + NADP(+) = (2S)-2-acetolactate + NADPH + H(+). The catalysed reaction is (2R,3R)-2,3-dihydroxy-3-methylpentanoate + NADP(+) = (S)-2-ethyl-2-hydroxy-3-oxobutanoate + NADPH + H(+). Its pathway is amino-acid biosynthesis; L-isoleucine biosynthesis; L-isoleucine from 2-oxobutanoate: step 2/4. It participates in amino-acid biosynthesis; L-valine biosynthesis; L-valine from pyruvate: step 2/4. Functionally, involved in the biosynthesis of branched-chain amino acids (BCAA). Catalyzes an alkyl-migration followed by a ketol-acid reduction of (S)-2-acetolactate (S2AL) to yield (R)-2,3-dihydroxy-isovalerate. In the isomerase reaction, S2AL is rearranged via a Mg-dependent methyl migration to produce 3-hydroxy-3-methyl-2-ketobutyrate (HMKB). In the reductase reaction, this 2-ketoacid undergoes a metal-dependent reduction by NADPH to yield (R)-2,3-dihydroxy-isovalerate. This chain is Ketol-acid reductoisomerase (NADP(+)), found in Escherichia coli O8 (strain IAI1).